The primary structure comprises 506 residues: ATP synthase subunit alpha (506 aa).

170 to 177 (GDRQTGKT) is an ATP binding site.

The protein belongs to the ATPase alpha/beta chains family. In terms of assembly, F-type ATPases have 2 components, CF(1) - the catalytic core - and CF(0) - the membrane proton channel. CF(1) has five subunits: alpha(3), beta(3), gamma(1), delta(1), epsilon(1). CF(0) has four main subunits: a(1), b(1), b'(1) and c(9-12).

The protein resides in the cellular thylakoid membrane. It catalyses the reaction ATP + H2O + 4 H(+)(in) = ADP + phosphate + 5 H(+)(out). Its function is as follows. Produces ATP from ADP in the presence of a proton gradient across the membrane. The alpha chain is a regulatory subunit. In Synechococcus sp. (strain WH7803), this protein is ATP synthase subunit alpha.